The chain runs to 176 residues: uncharacterized protein (176 aa).

This is an uncharacterized protein from Aquifex aeolicus (strain VF5).